We begin with the raw amino-acid sequence, 51 residues long: Probable antitoxin PhoAT (51 aa).

This sequence belongs to the PhoAT antitoxin family. In terms of assembly, interacts with toxin PhoH2.

Antitoxin component of a type II toxin-antitoxin (TA) system. The cognate antitoxin is PhoAT; the toxin gene cannot be expressed in the absence of the antitoxin gene in M.smegmatis (strain mc(2)4517), and abrogates the toxic effects of PhoH2 in M.smegmatis strain mc(2)155. The protein is Probable antitoxin PhoAT of Mycobacterium tuberculosis (strain ATCC 25618 / H37Rv).